A 283-amino-acid chain; its full sequence is Zinc import ATP-binding protein ZnuC (283 aa).

Positions 13 to 228 (VEMRNAGVHR…PEYVRLFGAR (216 aa)) constitute an ABC transporter domain. Position 45-52 (45-52 (GPNGSGKS)) interacts with ATP. Positions 264-283 (HHHDHARDGGQGGGGHGHAG) are disordered. The span at 272 to 283 (GGQGGGGHGHAG) shows a compositional bias: gly residues.

The protein belongs to the ABC transporter superfamily. Zinc importer (TC 3.A.1.15.5) family. As to quaternary structure, the complex is composed of two ATP-binding proteins (ZnuC), two transmembrane proteins (ZnuB) and a solute-binding protein (ZnuA).

Its subcellular location is the cell inner membrane. It carries out the reaction Zn(2+)(out) + ATP(in) + H2O(in) = Zn(2+)(in) + ADP(in) + phosphate(in) + H(+)(in). Its function is as follows. Part of the ABC transporter complex ZnuABC involved in zinc import. Responsible for energy coupling to the transport system. In Chelativorans sp. (strain BNC1), this protein is Zinc import ATP-binding protein ZnuC.